The following is a 251-amino-acid chain: Flap endonuclease Xni (251 aa).

The segment at 51–72 is disordered; it reads EDDRSDSWRHQSLPDYKAGRSP. Residue D104 participates in Mg(2+) binding. The region spanning 160 to 249 is the 5'-3' exonuclease domain; it reads VLPHQLPDYW…LSGNLQQLRL (90 aa). K(+) contacts are provided by L171, A172, P180, V182, and I185. The interaction with DNA stretch occupies residues 184 to 189; sequence GIGAKT.

This sequence belongs to the Xni family. Mg(2+) is required as a cofactor. K(+) serves as cofactor.

Functionally, has flap endonuclease activity. During DNA replication, flap endonucleases cleave the 5'-overhanging flap structure that is generated by displacement synthesis when DNA polymerase encounters the 5'-end of a downstream Okazaki fragment. This chain is Flap endonuclease Xni, found in Yersinia enterocolitica serotype O:8 / biotype 1B (strain NCTC 13174 / 8081).